The primary structure comprises 244 residues: Histone H1, orphon (244 aa).

The segment covering 1–21 has biased composition (low complexity); sequence MSDPAPEIEAPVEAAPVASPP. 2 disordered regions span residues 1 to 59 and 113 to 244; these read MSDP…PVSE and QAKG…KKAK. Residues 35-45 show a composition bias toward basic and acidic residues; the sequence is PKAEKPKSDKP. The H15 domain maps to 53–127; that stretch reads THPPVSEMVV…GASGSFKLPP (75 aa). A compositionally biased stretch (low complexity) spans 186-203; that stretch reads AKPASKKAAAPKPKAAKP. Residues 213–244 are compositionally biased toward basic residues; sequence ATKAAAKKPVAKPVAKKPAAKPAKKPAAKKAK.

This sequence belongs to the histone H1/H5 family.

The protein resides in the nucleus. It is found in the chromosome. In terms of biological role, histones H1 are necessary for the condensation of nucleosome chains into higher-order structures. In Chironomus thummi thummi (Midge), this protein is Histone H1, orphon.